The chain runs to 66 residues: Large ribosomal subunit protein bL33c (66 aa).

This sequence belongs to the bacterial ribosomal protein bL33 family.

The protein localises to the plastid. It is found in the chloroplast. This is Large ribosomal subunit protein bL33c from Cucumis sativus (Cucumber).